Consider the following 127-residue polypeptide: Snaclec CHH-B subunit alpha (127 aa).

3 disulfides stabilise this stretch: C4/C15, C32/C120, and C95/C112. The C-type lectin domain maps to 11–121 (YDRYCYKPFK…CEQQHSFICK (111 aa)).

This sequence belongs to the snaclec family. In terms of assembly, heterodimer of subunits alpha and beta; disulfide-linked. As to expression, expressed by the venom gland.

The protein resides in the secreted. Its function is as follows. Binds to the subunit GPIbalpha (GP1BA) of the platelet GPIb/V/IX receptor system. It inhibits ristocetin- and vWF-induced platelet aggregation in platelet-rich plasma by inhibiting the binding of vWF to GPIbalpha. The sequence is that of Snaclec CHH-B subunit alpha from Crotalus horridus (Timber rattlesnake).